The following is a 140-amino-acid chain: Large ribosomal subunit protein uL14 (140 aa).

It belongs to the universal ribosomal protein uL14 family.

This Nicotiana tabacum (Common tobacco) protein is Large ribosomal subunit protein uL14 (RPL23).